The primary structure comprises 226 residues: Ribosomal RNA small subunit methyltransferase G (226 aa).

S-adenosyl-L-methionine-binding positions include Gly-83, Phe-88, Ile-136–Glu-137, and Arg-152. The disordered stretch occupies residues Phe-199–Arg-226.

This sequence belongs to the methyltransferase superfamily. RNA methyltransferase RsmG family.

Its subcellular location is the cytoplasm. It carries out the reaction guanosine(527) in 16S rRNA + S-adenosyl-L-methionine = N(7)-methylguanosine(527) in 16S rRNA + S-adenosyl-L-homocysteine. Specifically methylates the N7 position of guanine in position 527 of 16S rRNA. In Parvibaculum lavamentivorans (strain DS-1 / DSM 13023 / NCIMB 13966), this protein is Ribosomal RNA small subunit methyltransferase G.